The sequence spans 476 residues: UDP-N-acetylmuramate--L-alanine ligase (476 aa).

123–129 is a binding site for ATP; the sequence is GTHGKTT.

This sequence belongs to the MurCDEF family.

The protein localises to the cytoplasm. The enzyme catalyses UDP-N-acetyl-alpha-D-muramate + L-alanine + ATP = UDP-N-acetyl-alpha-D-muramoyl-L-alanine + ADP + phosphate + H(+). The protein operates within cell wall biogenesis; peptidoglycan biosynthesis. Its function is as follows. Cell wall formation. This is UDP-N-acetylmuramate--L-alanine ligase from Nitrosococcus oceani (strain ATCC 19707 / BCRC 17464 / JCM 30415 / NCIMB 11848 / C-107).